Here is a 134-residue protein sequence, read N- to C-terminus: Profilin (134 aa).

This sequence belongs to the profilin family. Occurs in many kinds of cells as a complex with monomeric actin in a 1:1 ratio.

Its subcellular location is the cytoplasm. The protein localises to the cytoskeleton. Binds to actin and affects the structure of the cytoskeleton. At high concentrations, profilin prevents the polymerization of actin, whereas it enhances it at low concentrations. By binding to PIP2, it inhibits the formation of IP3 and DG. This is Profilin from Apium graveolens (Celery).